Here is a 566-residue protein sequence, read N- to C-terminus: Protein kintoun (566 aa).

3 disordered regions span residues 183–298 (KYKG…TAPQ), 399–467 (EEEE…AETG), and 493–552 (QLEE…ESRI). The span at 208–290 (PQQTTGPQQP…HQPTDPQQTT (83 aa)) shows a compositional bias: low complexity. Over residues 399–424 (EEEERRAEEEESRKGGDEDGELHPDC) the composition is skewed to basic and acidic residues. Residues 440-467 (TPAADTHTPAADTHTPAADTHTPAAETG) show a composition bias toward low complexity. The span at 535–550 (DPAHTDPAHTDPEMES) shows a compositional bias: basic and acidic residues.

This sequence belongs to the PIH1 family. Kintoun subfamily.

The protein localises to the cytoplasm. Its subcellular location is the dynein axonemal particle. Functionally, required for cytoplasmic pre-assembly of axonemal dyneins, thereby playing a central role in motility in cilia and flagella. Involved in pre-assembly of dynein arm complexes in the cytoplasm before intraflagellar transport loads them for the ciliary compartment. This Danio rerio (Zebrafish) protein is Protein kintoun.